A 1119-amino-acid chain; its full sequence is SH3 and PX domain-containing protein 2A (1119 aa).

The PX domain maps to 4 to 128 (RTVLDVKVVD…RFFETKPDDI (125 aa)). 2 SH3 domains span residues 149 to 208 (MVLE…SQSG) and 249 to 308 (SREE…KLKD). 5 disordered regions span residues 388 to 429 (SSAT…PPRR), 494 to 595 (APSS…SNPA), 641 to 815 (SSDD…HESV), 914 to 941 (NLRSMSNPSPPIPSKPPGGFSKPTAMLN), and 957 to 1004 (RPQS…SSFT). The SH3 3 domain occupies 445-504 (TVEAEYYTIAEFQSSISDGISFRGGQKADVIEKNSGGWWYVQIGDTEGWAPSSYIDKRKK). Composition is skewed to basic and acidic residues over residues 581-590 (PKPEPRKFEI) and 688-718 (GRAERHSSKLFSDESARNPKREPVMRKDVEI). Residues 779 to 802 (TASVVSSEDSTSSRSTSDLSSVYS) show a composition bias toward low complexity. Over residues 806 to 815 (RGGESDHESV) the composition is skewed to basic and acidic residues. The region spanning 812–871 (HESVLFRTTDAYERAQESELSFPAGVEVEVLEKQESGWWFVRWGSDEGWVPTFYLEPIKH) is the SH3 4 domain. The 62-residue stretch at 1058 to 1119 (NLREVYVSIA…VPSNYLERKK (62 aa)) folds into the SH3 5 domain.

Belongs to the SH3PXD2 family. Tyrosine phosphorylated.

The protein resides in the cytoplasm. The protein localises to the cell projection. Its subcellular location is the podosome. In terms of biological role, adapter protein involved in invadopodia and podosome formation and extracellular matrix degradation. The chain is SH3 and PX domain-containing protein 2A (sh3pxd2a) from Danio rerio (Zebrafish).